A 222-amino-acid polypeptide reads, in one-letter code: Transmembrane reductase CYB561D2 (222 aa).

Residues 2-17 (ALSVETESHIYRALRT) lie on the Cytoplasmic side of the membrane. One can recognise a Cytochrome b561 domain in the interval 14–217 (ALRTASGAAA…NQVSNAYLYR (204 aa)). A helical membrane pass occupies residues 18-38 (ASGAAAHLVALGFTIFVAVLA). Over 39 to 46 (RPGSSLFS) the chain is Lumenal. Residues 47–67 (WHPVLMSLAFSFLMTEALLMF) form a helical membrane-spanning segment. Heme b is bound at residue His48. At 68-85 (SPESSLLRSLSRKVRARC) the chain is on the cytoplasmic side. His86 and His120 together coordinate heme b. Residues 86–106 (HWVLQLLALLCALLGLGLVIL) form a helical membrane-spanning segment. Residues 107–122 (HKEQLGKAHLTTRHGQ) are Lumenal-facing. A helical membrane pass occupies residues 123 to 143 (AGLLAVLWAGLQCSGGMGLLY). The Cytoplasmic segment spans residues 144 to 162 (PKLLPRWPLAKLKLYHATS). Heme b is bound at residue His159. A helical membrane pass occupies residues 163 to 183 (GLVGYLLGSASLLLGMFSLWF). The Lumenal segment spans residues 184 to 186 (TAT). The helical transmembrane segment at 187–207 (VTGGAWYLAVLCPILTSLVIM) threads the bilayer. Over 208 to 222 (NQVSNAYLYRKRIQP) the chain is Cytoplasmic.

It depends on heme b as a cofactor. In terms of tissue distribution, highly expressed in the brain, lung, liver, and kidney. Moderately expressed in the heart, placenta, skeletal muscle, and pancreas.

The protein resides in the endoplasmic reticulum membrane. The protein localises to the cytoplasmic vesicle membrane. The catalysed reaction is monodehydro-L-ascorbate radical(out) + L-ascorbate(in) = monodehydro-L-ascorbate radical(in) + L-ascorbate(out). The enzyme catalyses Fe(3+)(out) + L-ascorbate(in) = monodehydro-L-ascorbate radical(in) + Fe(2+)(out) + H(+). In terms of biological role, transmembrane reductase that may use ascorbate as an electron donor in the cytoplasm and transfer electrons across endoplasmic reticulum membranes to reduce monodehydro-L-ascorbate radical and iron cations Fe(3+) in the lumen of that compartment. The sequence is that of Transmembrane reductase CYB561D2 from Mus musculus (Mouse).